We begin with the raw amino-acid sequence, 704 residues long: Cystathionine beta-synthase cbs-1 (704 aa).

Residues Asn454, 562-566, and Ser652 contribute to the pyridoxal 5'-phosphate site; that span reads GTGGT.

The protein belongs to the cysteine synthase/cystathionine beta-synthase family. In terms of assembly, monomer. Does not bind pyridoxal 5'-phosphate, PLP; which may explain why this isoform has virtually undetectable catalytic activity. The cofactor is pyridoxal 5'-phosphate.

It localises to the cytoplasm. The enzyme catalyses L-homocysteine + L-serine = L,L-cystathionine + H2O. The protein operates within amino-acid biosynthesis; L-cysteine biosynthesis; L-cysteine from L-homocysteine and L-serine: step 1/2. In terms of biological role, hydro-lyase catalyzing the first step of the transsulfuration pathway, where the hydroxyl group of L-serine is displaced by L-homocysteine in a beta-replacement reaction to form L-cystathionine, the precursor of L-cysteine. Plays a role in maintaining homocysteine homeostasis. Involved in cold-induced somatic longevity mediated by prostaglandin E2 (PGE2) signals from adult germ cells, perhaps acting via a role in the production of hydrogen sulfide (H2S). Required for normal development. The sequence is that of Cystathionine beta-synthase cbs-1 from Caenorhabditis elegans.